A 375-amino-acid polypeptide reads, in one-letter code: MLRYHMQGFSGYGVQYSPFFDNRLAVAAGSNFGLVGNGKLFILEIDRSGRIVEVNSFLTQDCLFDLAWNESHENQVLVAQGDGTLRLFDTTFKEFPIAIFKEHEREVFSCNWNLVNRQNFLSSSWDGSIKIWSPLRKQSLMTLTPRPLEITKMVDPLNAIILKKKSFTGISKNRNCVYQAQFSPHDQNLVLSCSGNSYASLFDIRLPSGKNQNNFLVHSGLEALTCDFNKYRPYVVATGGVDNAIRIWDIRMLNKNESATIKRTVPGQLHNSSCINEIPNAHGLAIRKVTWSPHHSNILMSASYDMTCRIWRDLSNDGAKETYKTNSTDATKGSIFNFTQHSEFVFGADWSLWGKPGYVASTAWDGNLFVWNGLG.

6 WD repeats span residues 58-89 (LTQDCLFDLAWNESHENQVLVAQGDGTLRLFD), 102-133 (EHEREVFSCNWNLVNRQNFLSSSWDGSIKIWS), 172-203 (KNRNCVYQAQFSPHDQNLVLSCSGNSYASLFD), 218-249 (HSGLEALTCDFNKYRPYVVATGGVDNAIRIWD), 281-312 (AHGLAIRKVTWSPHHSNILMSASYDMTCRIWR), and 340-372 (QHSEFVFGADWSLWGKPGYVASTAWDGNLFVWN).

Belongs to the WD repeat peroxin-7 family. As to quaternary structure, interacts with PEX21.

It localises to the cytoplasm. Its subcellular location is the cytosol. The protein localises to the peroxisome matrix. Its function is as follows. Receptor required for the peroxisomal import of proteins containing a C-terminal PTS2-type peroxisomal targeting signal, such as 3-oxoacyl-CoA thiolase. Specifically binds to cargo proteins containing a PTS2 peroxisomal targeting signal in the cytosol. Cargo protein-binding triggers interaction with PEX21 and formation of a ternary complex composed of PEX21 and PEX7 along with PTS2-containing cargo proteins, which is tranlocated into peroxisomes by passing through the PEX13-PEX14 docking complex. This chain is Peroxisomal targeting signal 2 receptor, found in Saccharomyces cerevisiae (strain ATCC 204508 / S288c) (Baker's yeast).